A 609-amino-acid polypeptide reads, in one-letter code: Arginine--tRNA ligase (609 aa).

Positions 114-124 match the 'HIGH' region motif; sequence VNPNKELHVGH.

This sequence belongs to the class-I aminoacyl-tRNA synthetase family. In terms of assembly, monomer.

It is found in the cytoplasm. It carries out the reaction tRNA(Arg) + L-arginine + ATP = L-arginyl-tRNA(Arg) + AMP + diphosphate. In Deinococcus radiodurans (strain ATCC 13939 / DSM 20539 / JCM 16871 / CCUG 27074 / LMG 4051 / NBRC 15346 / NCIMB 9279 / VKM B-1422 / R1), this protein is Arginine--tRNA ligase.